The chain runs to 623 residues: Glutathione import ATP-binding protein GsiA (623 aa).

ABC transporter domains follow at residues 15–269 (VENL…RALL) and 314–564 (LRVR…RKLL). ATP-binding positions include 49 to 56 (GESGSGKS) and 357 to 364 (GESGSGKS).

This sequence belongs to the ABC transporter superfamily. Glutathione importer (TC 3.A.1.5.11) family. The complex is composed of two ATP-binding proteins (GsiA), two transmembrane proteins (GsiC and GsiD) and a solute-binding protein (GsiB).

It localises to the cell inner membrane. It carries out the reaction glutathione(out) + ATP + H2O = glutathione(in) + ADP + phosphate + H(+). Part of the ABC transporter complex GsiABCD involved in glutathione import. Responsible for energy coupling to the transport system. In Escherichia coli O6:H1 (strain CFT073 / ATCC 700928 / UPEC), this protein is Glutathione import ATP-binding protein GsiA.